A 266-amino-acid chain; its full sequence is F-actin-capping protein subunit beta (266 aa).

The protein belongs to the F-actin-capping protein beta subunit family. In terms of assembly, component of the F-actin capping complex, composed of a heterodimer of an alpha and a beta subunit.

The protein localises to the cytoplasm. Its subcellular location is the cytoskeleton. The protein resides in the actin patch. Its function is as follows. F-actin-capping proteins bind in a Ca(2+)-independent manner to the fast growing ends of actin filaments (barbed end) thereby blocking the exchange of subunits at these ends. Unlike other capping proteins (such as gelsolin and severin), these proteins do not sever actin filaments. This is F-actin-capping protein subunit beta (cap2) from Aspergillus oryzae (strain ATCC 42149 / RIB 40) (Yellow koji mold).